Here is a 201-residue protein sequence, read N- to C-terminus: Small ribosomal subunit protein uS4c (201 aa).

The disordered stretch occupies residues L15–Q43. In terms of domain architecture, S4 RNA-binding spans M89–L152.

Belongs to the universal ribosomal protein uS4 family. As to quaternary structure, part of the 30S ribosomal subunit. Contacts protein S5. The interaction surface between S4 and S5 is involved in control of translational fidelity.

It is found in the plastid. Its subcellular location is the chloroplast. Functionally, one of the primary rRNA binding proteins, it binds directly to 16S rRNA where it nucleates assembly of the body of the 30S subunit. Its function is as follows. With S5 and S12 plays an important role in translational accuracy. This chain is Small ribosomal subunit protein uS4c (rps4), found in Panax ginseng (Korean ginseng).